The primary structure comprises 682 residues: DNA-directed RNA polymerase subunit beta' (682 aa).

4 residues coordinate Zn(2+): cysteine 69, cysteine 71, cysteine 87, and cysteine 90. Residues aspartate 489, aspartate 491, and aspartate 493 each coordinate Mg(2+).

Belongs to the RNA polymerase beta' chain family. RpoC1 subfamily. In terms of assembly, in plastids the minimal PEP RNA polymerase catalytic core is composed of four subunits: alpha, beta, beta', and beta''. When a (nuclear-encoded) sigma factor is associated with the core the holoenzyme is formed, which can initiate transcription. Mg(2+) is required as a cofactor. Zn(2+) serves as cofactor.

The protein localises to the plastid. Its subcellular location is the chloroplast. The catalysed reaction is RNA(n) + a ribonucleoside 5'-triphosphate = RNA(n+1) + diphosphate. DNA-dependent RNA polymerase catalyzes the transcription of DNA into RNA using the four ribonucleoside triphosphates as substrates. This Brachypodium distachyon (Purple false brome) protein is DNA-directed RNA polymerase subunit beta'.